We begin with the raw amino-acid sequence, 492 residues long: Bifunctional purine biosynthesis protein PurH (492 aa).

An MGS-like domain is found at 1–144; sequence MKKAILSVSN…KNYKHVTTIV (144 aa).

It belongs to the PurH family.

The enzyme catalyses (6R)-10-formyltetrahydrofolate + 5-amino-1-(5-phospho-beta-D-ribosyl)imidazole-4-carboxamide = 5-formamido-1-(5-phospho-D-ribosyl)imidazole-4-carboxamide + (6S)-5,6,7,8-tetrahydrofolate. The catalysed reaction is IMP + H2O = 5-formamido-1-(5-phospho-D-ribosyl)imidazole-4-carboxamide. It functions in the pathway purine metabolism; IMP biosynthesis via de novo pathway; 5-formamido-1-(5-phospho-D-ribosyl)imidazole-4-carboxamide from 5-amino-1-(5-phospho-D-ribosyl)imidazole-4-carboxamide (10-formyl THF route): step 1/1. It participates in purine metabolism; IMP biosynthesis via de novo pathway; IMP from 5-formamido-1-(5-phospho-D-ribosyl)imidazole-4-carboxamide: step 1/1. The polypeptide is Bifunctional purine biosynthesis protein PurH (Staphylococcus aureus (strain MRSA252)).